The following is a 317-amino-acid chain: Ribosomal protein L11 methyltransferase (317 aa).

4 residues coordinate S-adenosyl-L-methionine: Thr-158, Gly-179, Asp-201, and Asn-244.

The protein belongs to the methyltransferase superfamily. PrmA family.

The protein resides in the cytoplasm. It catalyses the reaction L-lysyl-[protein] + 3 S-adenosyl-L-methionine = N(6),N(6),N(6)-trimethyl-L-lysyl-[protein] + 3 S-adenosyl-L-homocysteine + 3 H(+). Methylates ribosomal protein L11. This Streptococcus pyogenes serotype M5 (strain Manfredo) protein is Ribosomal protein L11 methyltransferase.